We begin with the raw amino-acid sequence, 977 residues long: uncharacterized protein (977 aa).

The tract at residues 100 to 152 (ATSPLQQNGKSRDTEKPPSMKEKDLSSNSSSQHDKAFHERVDQGKNKSSTTKY) is disordered. 2 stretches are compositionally biased toward basic and acidic residues: residues 109–124 (KSRD…EKDL) and 131–144 (QHDK…DQGK). Serine 165 bears the Phosphoserine mark. Polar residues-rich tracts occupy residues 166–175 (PGQSVNSLKP) and 183–193 (STKSSTSSEMH). The disordered stretch occupies residues 166 to 194 (PGQSVNSLKPNSGDEVPSTKSSTSSEMHT).

This is an uncharacterized protein from Schizosaccharomyces pombe (strain 972 / ATCC 24843) (Fission yeast).